A 352-amino-acid chain; its full sequence is Probable protein phosphatase 2C 56 (352 aa).

2 disordered regions span residues 18–37 and 53–87; these read RGRRVAASPSPGGTPAASRG and SSSSFAPPRMQARRAAGSAARTRSPSQSNGWITGG. Low complexity-rich tracts occupy residues 23 to 37 and 53 to 75; these read AASPSPGGTPAASRG and SSSSFAPPRMQARRAAGSAARTR. The PPM-type phosphatase domain maps to 96–343; sequence SWDYSSFKGR…DNITCIVLQF (248 aa). Mn(2+)-binding residues include D132, G133, D295, and D334.

This sequence belongs to the PP2C family. The cofactor is Mg(2+). Mn(2+) is required as a cofactor.

It catalyses the reaction O-phospho-L-seryl-[protein] + H2O = L-seryl-[protein] + phosphate. It carries out the reaction O-phospho-L-threonyl-[protein] + H2O = L-threonyl-[protein] + phosphate. The polypeptide is Probable protein phosphatase 2C 56 (Oryza sativa subsp. japonica (Rice)).